The primary structure comprises 313 residues: Protoheme IX farnesyltransferase (313 aa).

Helical transmembrane passes span Val29–Pro49, Leu57–Phe77, Leu101–Trp123, Val124–Ile144, Ile157–Gly177, Tyr185–Ile205, Met225–Val245, Phe247–Trp267, and Ala287–Ile307.

Belongs to the UbiA prenyltransferase family. Protoheme IX farnesyltransferase subfamily.

The protein localises to the cell membrane. The catalysed reaction is heme b + (2E,6E)-farnesyl diphosphate + H2O = Fe(II)-heme o + diphosphate. Its pathway is porphyrin-containing compound metabolism; heme O biosynthesis; heme O from protoheme: step 1/1. Converts heme B (protoheme IX) to heme O by substitution of the vinyl group on carbon 2 of heme B porphyrin ring with a hydroxyethyl farnesyl side group. The chain is Protoheme IX farnesyltransferase from Deinococcus radiodurans (strain ATCC 13939 / DSM 20539 / JCM 16871 / CCUG 27074 / LMG 4051 / NBRC 15346 / NCIMB 9279 / VKM B-1422 / R1).